The following is a 432-amino-acid chain: Glutamyl-tRNA reductase (432 aa).

Substrate contacts are provided by residues 49–52, serine 101, 106–108, and glutamine 112; these read TCNR and ESQ. The active-site Nucleophile is the cysteine 50. 181-186 provides a ligand contact to NADP(+); the sequence is GTGETI. Residues 410 to 432 are disordered; the sequence is KPGYHHPTLQTTIVKTDETDPAS.

Belongs to the glutamyl-tRNA reductase family. Homodimer.

The catalysed reaction is (S)-4-amino-5-oxopentanoate + tRNA(Glu) + NADP(+) = L-glutamyl-tRNA(Glu) + NADPH + H(+). It participates in porphyrin-containing compound metabolism; protoporphyrin-IX biosynthesis; 5-aminolevulinate from L-glutamyl-tRNA(Glu): step 1/2. Catalyzes the NADPH-dependent reduction of glutamyl-tRNA(Glu) to glutamate 1-semialdehyde (GSA). In Xylella fastidiosa (strain 9a5c), this protein is Glutamyl-tRNA reductase.